Reading from the N-terminus, the 230-residue chain is MSRPPLLSSACLAATCSLLLGGCVAAGDVRPYAAMAPIVPVVAPTVQPTAGAIYAAGPGLNLYGDRRARDVGDLLTITLIESTTASSSANTSTSKKDATTMASPTLLGAPLTVAGLDVLQNTLKGDRAFDGKGNTAQSNRMQGSVTVTVIQRLPNGNLVVQGQKNLRLNQGDELVQVQGIVRDADIAPDNTIPSSKVAEARIAYGGRGAIAQSNAMGWLSRFFNSRLSPY.

Positions 1-15 (MSRPPLLSSACLAAT) are cleaved as a signal peptide. The N-palmitoyl cysteine moiety is linked to residue Cys-16. A lipid anchor (S-diacylglycerol cysteine) is attached at Cys-16.

This sequence belongs to the FlgH family. The basal body constitutes a major portion of the flagellar organelle and consists of four rings (L,P,S, and M) mounted on a central rod.

It localises to the cell outer membrane. It is found in the bacterial flagellum basal body. In terms of biological role, assembles around the rod to form the L-ring and probably protects the motor/basal body from shearing forces during rotation. This Xanthomonas oryzae pv. oryzae (strain MAFF 311018) protein is Flagellar L-ring protein.